The sequence spans 523 residues: NADH-ubiquinone oxidoreductase chain 2 (523 aa).

Helical transmembrane passes span 3 to 23, 30 to 50, 62 to 82, 110 to 130, 135 to 155, 170 to 190, 212 to 232, 246 to 266, 281 to 301, 306 to 326, 333 to 353, 386 to 406, 419 to 439, and 490 to 510; these read LFGV…IPAI, IILL…NNIG, VTTI…LVLL, SVLA…SSLI, LISM…LATI, FLLG…LYSF, IEIS…AAPF, VVTT…ILEF, LLLI…LAQY, LLTY…AINN, FLFY…ILVA, GLSL…VGFF, GNFF…AYYL, and LVIA…TPLL.

The protein belongs to the complex I subunit 2 family.

It localises to the mitochondrion inner membrane. It carries out the reaction a ubiquinone + NADH + 5 H(+)(in) = a ubiquinol + NAD(+) + 4 H(+)(out). Functionally, core subunit of the mitochondrial membrane respiratory chain NADH dehydrogenase (Complex I) that is believed to belong to the minimal assembly required for catalysis. Complex I functions in the transfer of electrons from NADH to the respiratory chain. The immediate electron acceptor for the enzyme is believed to be ubiquinone. This chain is NADH-ubiquinone oxidoreductase chain 2, found in Rhizopus oryzae (Mucormycosis agent).